We begin with the raw amino-acid sequence, 669 residues long: 5-taurinomethyluridine-[tRNA] synthase subunit MTO1, mitochondrial (669 aa).

A mitochondrion-targeting transit peptide spans Met1–Arg25. Residues Gly42–Gly47, Val154, Ser217, and Gln406 each bind FAD. Lys507 is modified (N6-methyllysine).

The protein belongs to the MnmG family. As to quaternary structure, homodimer; forms a dimer in the presence of potassium. Interacts with GTPBP3; forms the GTPBP3-MTO1 complex composed of homodimers of GTPBP3 and MTO1. FAD serves as cofactor. As to expression, ubiquitously expressed in various tissues, but with markedly elevated expression in tissues of high metabolic rates.

The protein localises to the mitochondrion. It catalyses the reaction 5,10-methylenetetrahydrofolate + uridine(34) in tRNA + taurine + GTP + A + H2O = 5-taurinomethyluridine(34) in tRNA + 7,8-dihydrofolate + GDP + AH2 + phosphate + H(+). In terms of biological role, component of the GTPBP3-MTO1 complex that catalyzes the 5-taurinomethyluridine (taum(5)U) modification at the 34th wobble position (U34) of mitochondrial tRNAs (mt-tRNAs), which plays a role in mt-tRNA decoding and mitochondrial translation. Taum(5)U formation on mammalian mt-tRNA requires the presence of both GTPBP3-mediated GTPase activity and MTO1 catalytic activity. This Mus musculus (Mouse) protein is 5-taurinomethyluridine-[tRNA] synthase subunit MTO1, mitochondrial.